A 580-amino-acid chain; its full sequence is Serine/threonine-protein kinase PINK1, mitochondrial (580 aa).

A mitochondrion-targeting transit peptide spans 1-77 (MAVRQALGRG…RFFRQSVAGL (77 aa)). Topologically, residues 78-93 (AARIQRQFMVRARGGA) are mitochondrial intermembrane. The helical transmembrane segment at 94 to 110 (GPCGRAVFLAFGLGLGL) threads the bilayer. A required for outer membrane localization region spans residues 111-117 (IEEKQAE). Topologically, residues 111–580 (IEEKQAEGRR…LLLSSWRAAP (470 aa)) are cytoplasmic. In terms of domain architecture, Protein kinase spans 156–510 (YLIGQAIGKG…LAANVLHLSL (355 aa)). Residues 162–170 (IGKGCNAAV) and K186 each bind ATP. The residue at position 227 (S227) is a Phosphoserine; by autocatalysis. D361 serves as the catalytic Proton acceptor. S401 is modified (phosphoserine; by autocatalysis).

The protein belongs to the protein kinase superfamily. Ser/Thr protein kinase family. As to quaternary structure, upon mitochondrial depolarization, it forms a supercomplex with TOM and TIM23 complexes. PINK1-TOM-TIM23 supercomplex formation requires PINK1 interaction with TOMM20 and TOMM70 and is critical for PINK1 stabilization at the outer mitochondrial membrane, kinase activation and downstream mitophagy. Upon mitochondrial depolarization, interacts with TIMM23; the interaction is required for PINK1 accumulation at the outer mitochondrial membrane, kinase activation by autophosphorylation and PRKN recruitement to mitochondria. Interacts with PRKN. Interacts with FBXO7. Forms a complex with PRKN and PARK7. Interacts with NENF. The cofactor is Mg(2+). In terms of processing, proteolytically cleaved. In healthy cells, the precursor is continuously imported into the inner mitochondrial membrane (IMM), where it is proteolytically cleaved by mitochondrial-processing peptidase (MPP) and then undergoes further proteolytic cleavage by PARL or AFG3L2 to give rise to the 52 kDa short form. The 52 kDa short form is then released into the cytosol where it rapidly undergoes proteasome-dependent degradation. In unhealthy cells, when cellular stress conditions lead to the loss of mitochondrial membrane potential, mitochondrial import is impaired leading to the precursor accumulating on the outer mitochondrial membrane (OMM). If accumulation at the OMM fails and it is imported into the depolarized mitochondria, it undergoes cleavage by the IMM protease OMA1, promoting its subsequent degradation by the proteasome. Post-translationally, autophosphorylated. Loss of mitochondrial membrane potential results in the precursor accumulating on the outer mitochondrial membrane (OMM) where it is activated by autophosphorylation. Autophosphorylation at Ser-227 and Ser-401 is essential for selective recruitment of PRKN to depolarized mitochondria, via PINK1-dependent phosphorylation of ubiquitin and PRKN. As to expression, high levels expressed in testis, lower levels in brain, heart, lung, liver and kidney.

Its subcellular location is the mitochondrion outer membrane. The protein resides in the mitochondrion inner membrane. The protein localises to the cytoplasm. It localises to the cytosol. The catalysed reaction is L-seryl-[protein] + ATP = O-phospho-L-seryl-[protein] + ADP + H(+). It carries out the reaction L-threonyl-[protein] + ATP = O-phospho-L-threonyl-[protein] + ADP + H(+). Serine/threonine-protein kinase which acts as a sensor of mitochondrial damage and protects against mitochondrial dysfunction during cellular stress. It phosphorylates mitochondrial proteins to coordinate mitochondrial quality control mechanisms that remove and replace dysfunctional mitochondrial components. Depending on the severity of mitochondrial damage, activity ranges from preventing apoptosis and stimulating mitochondrial biogenesis to eliminating severely damaged mitochondria via PINK1-PRKN-dependent mitophagy. When cellular stress results in irreversible mitochondrial damage, PINK1 accumulates at the outer mitochondrial membrane (OMM) where it phosphorylates pre-existing polyubiquitin chains at 'Ser-65', recruits PRKN from the cytosol to the OMM and activates PRKN by phosphorylation at 'Ser-65'. Activated PRKN then ubiquinates VDAC1 and other OMM proteins to initiate mitophagy. The PINK1-PRKN pathway also promotes fission of damaged mitochondria by phosphorylating and thus promoting the PRKN-dependent degradation of mitochondrial proteins involved in fission such as MFN2. This prevents the refusion of unhealthy mitochondria with the mitochondrial network or initiates mitochondrial fragmentation facilitating their later engulfment by autophagosomes. Also promotes mitochondrial fission independently of PRKN and ATG7-mediated mitophagy, via the phosphorylation and activation of DNM1L. Regulates motility of damaged mitochondria by promoting the ubiquitination and subsequent degradation of MIRO1 and MIRO2; in motor neurons, this likely inhibits mitochondrial intracellular anterograde transport along the axons which probably increases the chance of the mitochondria undergoing mitophagy in the soma. Required for ubiquinone reduction by mitochondrial complex I by mediating phosphorylation of complex I subunit NDUFA10. Phosphorylates LETM1, positively regulating its mitochondrial calcium transport activity. The protein is Serine/threonine-protein kinase PINK1, mitochondrial (Pink1) of Mus musculus (Mouse).